The primary structure comprises 459 residues: Bifunctional protein GlmU (459 aa).

Positions 1-229 are pyrophosphorylase; that stretch reads MSNFAIILAA…FDESLGVNDR (229 aa). Residues 8-11, Lys-22, Gln-72, and 77-78 contribute to the UDP-N-acetyl-alpha-D-glucosamine site; these read LAAG and GT. A Mg(2+)-binding site is contributed by Asp-102. The UDP-N-acetyl-alpha-D-glucosamine site is built by Gly-139, Glu-154, Asn-169, and Asn-227. Asn-227 serves as a coordination point for Mg(2+). The interval 230–250 is linker; that stretch reads VALATAESVMRRRINHKHMVN. The segment at 251–459 is N-acetyltransferase; it reads GVSFVNPEAT…TRLPHHPKNQ (209 aa). UDP-N-acetyl-alpha-D-glucosamine contacts are provided by Arg-332 and Lys-350. Residue His-362 is the Proton acceptor of the active site. UDP-N-acetyl-alpha-D-glucosamine-binding residues include Tyr-365 and Asn-376. Acetyl-CoA-binding positions include Ala-379, 385 to 386, Ser-404, Ala-422, and Arg-439; that span reads NY.

It in the N-terminal section; belongs to the N-acetylglucosamine-1-phosphate uridyltransferase family. In the C-terminal section; belongs to the transferase hexapeptide repeat family. Homotrimer. Mg(2+) serves as cofactor.

The protein resides in the cytoplasm. It carries out the reaction alpha-D-glucosamine 1-phosphate + acetyl-CoA = N-acetyl-alpha-D-glucosamine 1-phosphate + CoA + H(+). It catalyses the reaction N-acetyl-alpha-D-glucosamine 1-phosphate + UTP + H(+) = UDP-N-acetyl-alpha-D-glucosamine + diphosphate. It participates in nucleotide-sugar biosynthesis; UDP-N-acetyl-alpha-D-glucosamine biosynthesis; N-acetyl-alpha-D-glucosamine 1-phosphate from alpha-D-glucosamine 6-phosphate (route II): step 2/2. Its pathway is nucleotide-sugar biosynthesis; UDP-N-acetyl-alpha-D-glucosamine biosynthesis; UDP-N-acetyl-alpha-D-glucosamine from N-acetyl-alpha-D-glucosamine 1-phosphate: step 1/1. The protein operates within bacterial outer membrane biogenesis; LPS lipid A biosynthesis. Catalyzes the last two sequential reactions in the de novo biosynthetic pathway for UDP-N-acetylglucosamine (UDP-GlcNAc). The C-terminal domain catalyzes the transfer of acetyl group from acetyl coenzyme A to glucosamine-1-phosphate (GlcN-1-P) to produce N-acetylglucosamine-1-phosphate (GlcNAc-1-P), which is converted into UDP-GlcNAc by the transfer of uridine 5-monophosphate (from uridine 5-triphosphate), a reaction catalyzed by the N-terminal domain. The polypeptide is Bifunctional protein GlmU (Streptococcus pneumoniae (strain Taiwan19F-14)).